The primary structure comprises 499 residues: Lysine--tRNA ligase (499 aa).

Residues Glu403 and Glu410 each coordinate Mg(2+).

This sequence belongs to the class-II aminoacyl-tRNA synthetase family. As to quaternary structure, homodimer. Mg(2+) is required as a cofactor.

The protein localises to the cytoplasm. The enzyme catalyses tRNA(Lys) + L-lysine + ATP = L-lysyl-tRNA(Lys) + AMP + diphosphate. This Campylobacter hominis (strain ATCC BAA-381 / DSM 21671 / CCUG 45161 / LMG 19568 / NCTC 13146 / CH001A) protein is Lysine--tRNA ligase.